Reading from the N-terminus, the 218-residue chain is Glutathione S-transferase Mu 2 (218 aa).

A GST N-terminal domain is found at 2–88; the sequence is PMTLGYWNIR…YIARKHNLCG (87 aa). Residue 7-8 coordinates glutathione; it reads YW. Phosphoserine occurs at positions 27 and 44. Glutathione-binding positions include 43–46, Lys-50, 59–60, and 72–73; these read RSQW, NL, and QS. The region spanning 90–208 is the GST C-terminal domain; it reads SEKEQIREDI…KSSRFLPRPV (119 aa). Tyr-116 provides a ligand contact to substrate.

Belongs to the GST superfamily. Mu family. Homodimer. In terms of tissue distribution, muscle.

Its subcellular location is the cytoplasm. It catalyses the reaction RX + glutathione = an S-substituted glutathione + a halide anion + H(+). The enzyme catalyses 11(S)-hydroxy-14(S),15(S)-epoxy-(5Z,8Z,12E)-eicosatrienoate + glutathione = (11S,15S)-dihydroxy-14(R)-S-glutathionyl-(5Z,8Z,12E)-eicosatrienoate. Conjugation of reduced glutathione to a wide number of exogenous and endogenous hydrophobic electrophiles. Participates in the formation of novel hepoxilin regioisomers. The polypeptide is Glutathione S-transferase Mu 2 (Homo sapiens (Human)).